Consider the following 382-residue polypeptide: MQNVMKFHLVIFMLFGSVRLQNPTIERKQCTMSNCFDFSKCSTSKKVYIHPMEKRFEESPQSVIYSKILKHFLESNHYTNDPNEACIFLLGIDTTDRDVRSQNYVKNVNDYIESLDPSVWNNGRNHLIFNFYHGTFPDYDDHNLNFDTGEAMIARASSSENNFIKVFDVSLPLFHENHPYEIKESKSERNDDRIENQRKYLVSFKGKRYVYGIGSGTRNLVHHLHNGDDIVMVTTCKHNNDWQVYQDDRCQRDNDEYDRWEYDELLANSTFCLVPRGRRLGSFRFLETLRSGCVPVVISDSWILPFSETIDWNSAAIVVAERDALSIPELLMSTSRRRVKELRESARNVYDAYLRSIQVISDHVLRIIFKRIDNKIELEDHQ.

The signal sequence occupies residues 1-20 (MQNVMKFHLVIFMLFGSVRL). An N-linked (GlcNAc...) asparagine glycan is attached at Asn268.

It belongs to the glycosyltransferase 47 family. In terms of assembly, interacts with rib-2.

The protein localises to the endoplasmic reticulum. Its subcellular location is the golgi apparatus. Its function is as follows. Required for the biosynthesis of heparan sulfate by positively regulating N-acetylglucosamine transferase II (GlcNAcT-II) and glucuronyl transferase II (GlcAT-II) activities of glycosyltransferase rib-2. Probably not directly involved in chondroitin sulfate biosynthesis but negatively regulates chondroitin sulfate levels. Maternally required for normal ventral epidermal enclosure and for embryo elongation during the early stages of embryonic development. In addition, involved in the elongation of the pharyngeal isthmus and in the organization of the actin cytoskeleton in the pharyngeal muscles during the later stages embryonic development. In adults, regulates egg-laying and the normal morphogenesis of the vulva. Also involved in the directed migration of hermaphrodite-specific neurons. This chain is Exostosin-1 homolog (rib-1), found in Caenorhabditis elegans.